A 516-amino-acid chain; its full sequence is Putative sel1-like repeat-containing protein R850 (516 aa).

Sel1-like repeat units follow at residues 103–138 (ALTY…NMNS) and 230–265 (SISQ…KQGD).

The polypeptide is Putative sel1-like repeat-containing protein R850 (Acanthamoeba polyphaga (Amoeba)).